Here is a 397-residue protein sequence, read N- to C-terminus: Purine ribonucleoside efflux pump NepI (397 aa).

At 1–21 the chain is on the cytoplasmic side; the sequence is MNENIAEKFRADGVARPNWSA. The helical transmembrane segment at 22–42 threads the bilayer; that stretch reads VFAVAFCVACLITVEFLPVSL. Residues 43-54 lie on the Periplasmic side of the membrane; that stretch reads LTPMAQDLGISE. The chain crosses the membrane as a helical span at residues 55–75; sequence GVAGQSVTVTAFVAMFSSLFI. Residues 76 to 85 lie on the Cytoplasmic side of the membrane; the sequence is TQIIQATDRR. A helical membrane pass occupies residues 86 to 106; the sequence is YIVILFAVLLTASCLMVSFAN. Position 107 (serine 107) is a topological domain, periplasmic. A helical membrane pass occupies residues 108–128; it reads FTLLLLGRACLGLALGGFWAM. The Cytoplasmic segment spans residues 129–147; the sequence is SASLTMRLVPARTVPKALS. The chain crosses the membrane as a helical span at residues 148–168; sequence VIFGAVSIALVIAAPLGSFLG. Over 169–175 the chain is Periplasmic; sequence GIIGWRN. A helical membrane pass occupies residues 176–196; it reads VFNAAAVMGVLCVIWVVKSLP. Residues 197 to 215 lie on the Cytoplasmic side of the membrane; that stretch reads SLPGEPSHQKQNMFSLLQR. A helical transmembrane segment spans residues 216-236; that stretch reads PGVMAGMIAIFMSFAGQFAFF. At 237 to 255 the chain is on the periplasmic side; that stretch reads TYIRPVYMNLAGFDVDGLT. Residues 256–276 traverse the membrane as a helical segment; it reads LVLLSFGIASFVGTSFSSYVL. Residues 277–281 lie on the Cytoplasmic side of the membrane; sequence KRSVK. A helical transmembrane segment spans residues 282–302; sequence LALAGAPLLLALSALTLIVWG. The Periplasmic portion of the chain corresponds to 303 to 305; sequence SDK. The chain crosses the membrane as a helical span at residues 306–326; it reads TVAAVIAIIWGLAFALVPVGW. At 327-343 the chain is on the cytoplasmic side; the sequence is STWITRSLADQAEKAGS. A helical transmembrane segment spans residues 344 to 364; it reads IQVAVIQLANTCGAAVGGYAL. Residues 365 to 366 lie on the Periplasmic side of the membrane; sequence DN. A helical membrane pass occupies residues 367-387; it reads FGLLSPLALSGGLMLLTALVV. Over 388 to 397 the chain is Cytoplasmic; sequence AAKVRITPMS.

Belongs to the major facilitator superfamily. DHA1 family. NepI (TC 2.A.1.2.26) subfamily.

The protein localises to the cell inner membrane. The catalysed reaction is inosine(in) + H(+)(out) = inosine(out) + H(+)(in). The enzyme catalyses guanosine(in) + H(+)(out) = guanosine(out) + H(+)(in). Functionally, involved in the efflux of purine ribonucleosides, such as inosine and guanosine. This chain is Purine ribonucleoside efflux pump NepI, found in Salmonella paratyphi B (strain ATCC BAA-1250 / SPB7).